Reading from the N-terminus, the 40-residue chain is Sauvagin (40 aa).

The residue at position 1 (Gln1) is a Pyrrolidone carboxylic acid. At Ile40 the chain carries Isoleucine amide.

The protein belongs to the sauvagine/corticotropin-releasing factor/urotensin I family.

Its subcellular location is the secreted. Functionally, hypotensive and diuretic peptide. This is Sauvagin from Phyllomedusa sauvagei (Sauvage's leaf frog).